The chain runs to 69 residues: Cytochrome c oxidase subunit 8A, mitochondrial (69 aa).

The transit peptide at 1–25 directs the protein to the mitochondrion; that stretch reads MSVLTPLLLRGLTGSARRLPVPRAK. Positions 2–19 match the SIFI-degron motif; that stretch reads SVLTPLLLRGLTGSARRL. Over 26–36 the chain is Mitochondrial matrix; it reads IHSLPPEEKLG. Residues 37–60 form a helical membrane-spanning segment; it reads IMELAVGLTSCFVTFLLPAGWILS. The Mitochondrial intermembrane segment spans residues 61 to 69; the sequence is HLETYRRPE.

Belongs to the cytochrome c oxidase VIII family. Component of the cytochrome c oxidase (complex IV, CIV), a multisubunit enzyme composed of 14 subunits. The complex is composed of a catalytic core of 3 subunits MT-CO1, MT-CO2 and MT-CO3, encoded in the mitochondrial DNA, and 11 supernumerary subunits COX4I, COX5A, COX5B, COX6A, COX6B, COX6C, COX7A, COX7B, COX7C, COX8 and NDUFA4, which are encoded in the nuclear genome. The complex exists as a monomer or a dimer and forms supercomplexes (SCs) in the inner mitochondrial membrane with NADH-ubiquinone oxidoreductase (complex I, CI) and ubiquinol-cytochrome c oxidoreductase (cytochrome b-c1 complex, complex III, CIII), resulting in different assemblies (supercomplex SCI(1)III(2)IV(1) and megacomplex MCI(2)III(2)IV(2)). Post-translationally, in response to mitochondrial stress, the precursor protein is ubiquitinated by the SIFI complex in the cytoplasm before mitochondrial import, leading to its degradation. Within the SIFI complex, UBR4 initiates ubiquitin chain that are further elongated or branched by KCMF1.

The protein resides in the mitochondrion inner membrane. It functions in the pathway energy metabolism; oxidative phosphorylation. Component of the cytochrome c oxidase, the last enzyme in the mitochondrial electron transport chain which drives oxidative phosphorylation. The respiratory chain contains 3 multisubunit complexes succinate dehydrogenase (complex II, CII), ubiquinol-cytochrome c oxidoreductase (cytochrome b-c1 complex, complex III, CIII) and cytochrome c oxidase (complex IV, CIV), that cooperate to transfer electrons derived from NADH and succinate to molecular oxygen, creating an electrochemical gradient over the inner membrane that drives transmembrane transport and the ATP synthase. Cytochrome c oxidase is the component of the respiratory chain that catalyzes the reduction of oxygen to water. Electrons originating from reduced cytochrome c in the intermembrane space (IMS) are transferred via the dinuclear copper A center (CU(A)) of subunit 2 and heme A of subunit 1 to the active site in subunit 1, a binuclear center (BNC) formed by heme A3 and copper B (CU(B)). The BNC reduces molecular oxygen to 2 water molecules using 4 electrons from cytochrome c in the IMS and 4 protons from the mitochondrial matrix. This Hylobates agilis (Agile gibbon) protein is Cytochrome c oxidase subunit 8A, mitochondrial (COX8A).